Consider the following 375-residue polypeptide: MAGKEKAVWPPVWAAGAMSGTSFDGVDVALLLTDGVRIEAFGDAREVAYSDADRAILREAMGAWPGEARAEVAAQVVEAAHITAMVDLPDVALLGFHGQTLAHDPEARRTHQVGDGAVLANALGVEVIWDFRSADMGLGGQGAPLAPFYHWACARWIGAQGPVAILNLGGVGNITWVDPSIEGPELPGACLAFDTGPANAPIDDLMVRRGLGACDVGGALAARGEIDLKILEEALEAPWFDLAPPKSLDRDAFSGLADAVSGLSDADASATLTAVSAGAVARGLAHLSSRPRQVLVAGGGRKNATLMAMVQDALGCDVRAVEDVGLNGDALEAQAFAYLAVRVARGLPTSAPSTTGVAAPVGGGRRSKPGARELS.

Residue 20-27 (GTSFDGVD) coordinates ATP. The disordered stretch occupies residues 351 to 375 (APSTTGVAAPVGGGRRSKPGARELS).

It belongs to the anhydro-N-acetylmuramic acid kinase family.

It catalyses the reaction 1,6-anhydro-N-acetyl-beta-muramate + ATP + H2O = N-acetyl-D-muramate 6-phosphate + ADP + H(+). Its pathway is amino-sugar metabolism; 1,6-anhydro-N-acetylmuramate degradation. It participates in cell wall biogenesis; peptidoglycan recycling. In terms of biological role, catalyzes the specific phosphorylation of 1,6-anhydro-N-acetylmuramic acid (anhMurNAc) with the simultaneous cleavage of the 1,6-anhydro ring, generating MurNAc-6-P. Is required for the utilization of anhMurNAc either imported from the medium or derived from its own cell wall murein, and thus plays a role in cell wall recycling. In Jannaschia sp. (strain CCS1), this protein is Anhydro-N-acetylmuramic acid kinase 1.